Reading from the N-terminus, the 168-residue chain is Ribosome maturation factor RimM (168 aa).

One can recognise a PRC barrel domain in the interval 95 to 166 (EHEFYYSDII…RIQITPMEGL (72 aa)).

The protein belongs to the RimM family. Binds ribosomal protein uS19.

It localises to the cytoplasm. Its function is as follows. An accessory protein needed during the final step in the assembly of 30S ribosomal subunit, possibly for assembly of the head region. Essential for efficient processing of 16S rRNA. May be needed both before and after RbfA during the maturation of 16S rRNA. It has affinity for free ribosomal 30S subunits but not for 70S ribosomes. The protein is Ribosome maturation factor RimM of Staphylococcus saprophyticus subsp. saprophyticus (strain ATCC 15305 / DSM 20229 / NCIMB 8711 / NCTC 7292 / S-41).